A 159-amino-acid polypeptide reads, in one-letter code: Heavy metal-associated isoprenylated plant protein 28 (159 aa).

The HMA domain occupies 10–73 (LQTIEMRVHM…KVRKTGRRAE (64 aa)). Cys-21 and Cys-24 together coordinate a metal cation. Cys-156 is modified (cysteine methyl ester). Residue Cys-156 is the site of S-farnesyl cysteine attachment. The propeptide at 157–159 (SIM) is removed in mature form.

It belongs to the HIPP family.

In terms of biological role, heavy-metal-binding protein. This chain is Heavy metal-associated isoprenylated plant protein 28, found in Arabidopsis thaliana (Mouse-ear cress).